The primary structure comprises 337 residues: Mannan polymerase complex subunit mnn9 (337 aa).

Topologically, residues 1–8 (MRVYNKSR) are cytoplasmic. Residues 9–29 (IVGQLLFVALGITFIYYLFTP) form a helical; Signal-anchor for type II membrane protein membrane-spanning segment. At 30 to 337 (SVNSNAKVQI…PYYLVFHHNE (308 aa)) the chain is on the lumenal side.

It belongs to the ANP1/MMN9/VAN1 family.

The protein resides in the endoplasmic reticulum membrane. The protein localises to the golgi apparatus membrane. It participates in protein modification; protein glycosylation. Functionally, required for the addition of the long alpha 1,6-mannose backbone of N-linked glycans on cell wall and periplasmic proteins. The chain is Mannan polymerase complex subunit mnn9 from Schizosaccharomyces pombe (strain 972 / ATCC 24843) (Fission yeast).